We begin with the raw amino-acid sequence, 290 residues long: MTFQEIIFSLQQFWSSKGCIIGNPYDIEKGAGTFNPNTFLMSLGPEPWNVAYVEPSRRPKDGRYGDNPNRVYQHHQFQVIMKPSPTNIQELYLESLRVLGIEPEKHDIRFVEDDWESPTLGAWGLGWEVWLDGMEITQFTYFQQVGGLELEVIPVEITYGLERLALYIQNKENVYDLEWTKGVKYGDMRYQFEFENSKYSFELATLDKHFKWFDEYEEEAKKILDQGLVLPAYDYVLKCSHAFNVLDSRGAISTTERMGYILRVRNLARRCAEVFVENRKALGYPLLNKK.

This sequence belongs to the class-II aminoacyl-tRNA synthetase family. In terms of assembly, tetramer of two alpha and two beta subunits.

The protein resides in the cytoplasm. It catalyses the reaction tRNA(Gly) + glycine + ATP = glycyl-tRNA(Gly) + AMP + diphosphate. The chain is Glycine--tRNA ligase alpha subunit from Fusobacterium nucleatum subsp. nucleatum (strain ATCC 25586 / DSM 15643 / BCRC 10681 / CIP 101130 / JCM 8532 / KCTC 2640 / LMG 13131 / VPI 4355).